A 377-amino-acid polypeptide reads, in one-letter code: Aquaporin-2 (377 aa).

Topologically, residues methionine 1–histidine 14 are cytoplasmic. A helical transmembrane segment spans residues phenylalanine 15–glycine 35. Residues threonine 36–asparagine 56 lie on the Extracellular side of the membrane. Asparagine 40 is a glycosylation site (N-linked (GlcNAc...) asparagine). The helical transmembrane segment at glutamine 57 to phenylalanine 77 threads the bilayer. Over arginine 78–alanine 87 the chain is Cytoplasmic. The short motif at asparagine 85 to alanine 87 is the NPA 1 element. The chain crosses the membrane as a helical span at residues valine 88–isoleucine 108. Residues alanine 109–glutamine 144 lie on the Extracellular side of the membrane. A helical membrane pass occupies residues glycine 145–alanine 165. Residues glutamate 166–threonine 171 lie on the Cytoplasmic side of the membrane. Residues phenylalanine 172–tryptophan 192 traverse the membrane as a helical segment. The Extracellular segment spans residues threonine 193–histidine 215. The NPA 2 signature appears at asparagine 198–alanine 200. A helical membrane pass occupies residues tryptophan 216–isoleucine 236. Residues lysine 237–proline 377 are Cytoplasmic-facing. Disordered stretches follow at residues leucine 278 to glutamate 332 and arginine 358 to proline 377. 2 stretches are compositionally biased toward polar residues: residues proline 315–isoleucine 328 and alanine 368–proline 377.

Belongs to the MIP/aquaporin (TC 1.A.8) family.

The protein localises to the membrane. The catalysed reaction is H2O(in) = H2O(out). The enzyme catalyses glycerol(in) = glycerol(out). Functionally, water channel required to facilitate the transport of water across membranes. Involved in conidiation. In Botryotinia fuckeliana (strain B05.10) (Noble rot fungus), this protein is Aquaporin-2.